We begin with the raw amino-acid sequence, 407 residues long: MSLGIRYLALLPLFVITACQQPVNYNPPATQVAQVQPAIVNNSWIEISRSALDFNVKKVQSLLGKQSSLCAVLKGDAYGHDLSLVAPIMIENNVKCIGVTNNQELKEVRDLGFKGRLMRVRNATEQEMAQATNYNVEELIGDLDMAKRLDAIAKQQNKVIPIHLALNSGGMSRNGLEVDNKSGLEKAKQISQLANLKVVGIMSHYPEEDANKVREDLARFKQQSQQVLEVMGLERNNVTLHMANTFATITVPESWLDMVRVGGIFYGDTIASTDYKRVMTFKSNIASINYYPKGNTVGYDRTYTLKRDSVLANIPVGYADGYRRVFSNAGHALIAGQRVPVLGKTSMNTVIVDITSLNNIKPGDEVVFFGKQGNSEITAEEIEDISGALFTEMSILWGATNQRVLVD.

The signal sequence occupies residues 1–18; the sequence is MSLGIRYLALLPLFVITA. C19 is lipidated: N-palmitoyl cysteine. C19 is lipidated: S-diacylglycerol cysteine. C70 and C96 are disulfide-bonded. The active-site Proton acceptor is the K74. The residue at position 74 (K74) is an N6-(pyridoxal phosphate)lysine. R173 lines the substrate pocket. The active-site Proton acceptor is the Y299. Residue M347 participates in substrate binding.

It belongs to the alanine racemase family. Bsr subfamily. Forms a head-to-tail homodimer in the structure. It depends on pyridoxal 5'-phosphate as a cofactor.

The protein resides in the cell membrane. It is found in the periplasm. It catalyses the reaction L-lysine = D-lysine. It carries out the reaction L-arginine = D-arginine. With respect to regulation, the racemization activity of Lyr is completely inhibited by hydroxylamine. Its function is as follows. Amino-acid racemase that catalyzes the interconversion of L-lysine and D-lysine. To a lesser extent, is also able to interconvert arginine enantiomers. Cannot use methionine, asparagine, alanine, leucine, glutamine, phenylalanine and histidine as substrates. The chain is Lysine racemase from Proteus mirabilis.